A 785-amino-acid chain; its full sequence is Endonuclease MutS2 (785 aa).

335-342 (GPNTGGKT) lines the ATP pocket. A Smr domain is found at 710 to 785 (LDLRGERYED…GNGVTIVEFK (76 aa)).

Belongs to the DNA mismatch repair MutS family. MutS2 subfamily. As to quaternary structure, homodimer. Binds to stalled ribosomes, contacting rRNA.

In terms of biological role, endonuclease that is involved in the suppression of homologous recombination and thus may have a key role in the control of bacterial genetic diversity. Its function is as follows. Acts as a ribosome collision sensor, splitting the ribosome into its 2 subunits. Detects stalled/collided 70S ribosomes which it binds and splits by an ATP-hydrolysis driven conformational change. Acts upstream of the ribosome quality control system (RQC), a ribosome-associated complex that mediates the extraction of incompletely synthesized nascent chains from stalled ribosomes and their subsequent degradation. Probably generates substrates for RQC. This is Endonuclease MutS2 from Listeria innocua serovar 6a (strain ATCC BAA-680 / CLIP 11262).